Reading from the N-terminus, the 165-residue chain is Sulfopyruvate decarboxylase subunit alpha (165 aa).

This sequence belongs to the ComD family. Heterododecamer composed of 6 subunits alpha and 6 subunits beta.

The enzyme catalyses 3-sulfopyruvate + H(+) = sulfoacetaldehyde + CO2. The protein operates within cofactor biosynthesis; coenzyme M biosynthesis; sulfoacetaldehyde from phosphoenolpyruvate and sulfite: step 4/4. Functionally, involved in the biosynthesis of the coenzyme M (2-mercaptoethanesulfonic acid). Catalyzes the decarboxylation of sulfopyruvate to sulfoacetaldehyde. The chain is Sulfopyruvate decarboxylase subunit alpha from Methanothermobacter thermautotrophicus (strain ATCC 29096 / DSM 1053 / JCM 10044 / NBRC 100330 / Delta H) (Methanobacterium thermoautotrophicum).